Reading from the N-terminus, the 588-residue chain is Protein disulfide-isomerase-like protein of the testis (588 aa).

A signal peptide spans 1 to 20; the sequence is MELLWTPLLLVAACLSEVLG. Residues N55, N157, and N337 are each glycosylated (N-linked (GlcNAc...) asparagine). The Thioredoxin domain occupies 385–448; that stretch reads PVKKLVGKNF…IAKIDITAND (64 aa). 3 stretches are compositionally biased toward basic and acidic residues: residues 531–542, 549–567, and 574–588; these read IEDTSKQDRPVK, SIRKPEEPERRKETAEREA, and EQPKPERKLEVKEEL. The tract at residues 531–588 is disordered; it reads IEDTSKQDRPVKESPVLDSIRKPEEPERRKETAEREAAAAQPKEQPKPERKLEVKEEL. The Prevents secretion from ER signature appears at 585 to 588; the sequence is KEEL.

This sequence belongs to the protein disulfide isomerase family. In terms of assembly, homodimer. The homodimer is not disulfide-linked. Interacts with CLGN and ERO1A. N-glycosylated. As to expression, testis-specific (at protein level).

The protein localises to the endoplasmic reticulum. Its function is as follows. Probable redox-inactive chaperone involved in spermatogenesis. In Mus musculus (Mouse), this protein is Protein disulfide-isomerase-like protein of the testis (Pdilt).